The primary structure comprises 173 residues: Ribosome maturation factor RimM (173 aa).

The PRC barrel domain maps to 92-165; sequence EDEYYHTDLI…RVVVALPQEI (74 aa).

It belongs to the RimM family. As to quaternary structure, binds ribosomal protein uS19.

It localises to the cytoplasm. An accessory protein needed during the final step in the assembly of 30S ribosomal subunit, possibly for assembly of the head region. Essential for efficient processing of 16S rRNA. May be needed both before and after RbfA during the maturation of 16S rRNA. It has affinity for free ribosomal 30S subunits but not for 70S ribosomes. The sequence is that of Ribosome maturation factor RimM from Bradyrhizobium diazoefficiens (strain JCM 10833 / BCRC 13528 / IAM 13628 / NBRC 14792 / USDA 110).